The following is a 412-amino-acid chain: Putative competence-damage inducible protein (412 aa).

It belongs to the CinA family.

In Bacillus thuringiensis (strain Al Hakam), this protein is Putative competence-damage inducible protein.